The following is a 117-amino-acid chain: Ribosome-binding factor A (117 aa).

The protein belongs to the RbfA family. In terms of assembly, monomer. Binds 30S ribosomal subunits, but not 50S ribosomal subunits or 70S ribosomes.

The protein localises to the cytoplasm. One of several proteins that assist in the late maturation steps of the functional core of the 30S ribosomal subunit. Associates with free 30S ribosomal subunits (but not with 30S subunits that are part of 70S ribosomes or polysomes). Required for efficient processing of 16S rRNA. May interact with the 5'-terminal helix region of 16S rRNA. This Blochmanniella floridana protein is Ribosome-binding factor A.